The primary structure comprises 445 residues: FAS-associated factor 2-A (445 aa).

Residues 12-53 (EQTEKLLQFQDLTGIESMDQCRQTLQQHNWNIEAAVQDRLNE) enclose the UBA domain. Positions 275–353 (SERLEREERN…ERKSECLPAE (79 aa)) form a coiled coil. Positions 302-354 (RADQEKERKKKEKQEQKRREEEEAQRKQMLEERKKRNLEEEKERKSECLPAEP) are disordered. Over residues 303–348 (ADQEKERKKKEKQEQKRREEEEAQRKQMLEERKKRNLEEEKERKSE) the composition is skewed to basic and acidic residues. The UBX domain maps to 357-439 (DHPDNVKIIF…GLSQSQLLFV (83 aa)).

The protein resides in the cytoplasm. The protein localises to the lipid droplet. Its subcellular location is the endoplasmic reticulum. Its function is as follows. Plays an important role in endoplasmic reticulum-associated degradation (ERAD) that mediates ubiquitin-dependent degradation of misfolded endoplasmic reticulum proteins. Involved in inhibition of lipid droplet degradation. Involved in stress granule disassembly. In Xenopus laevis (African clawed frog), this protein is FAS-associated factor 2-A (faf2-a).